The sequence spans 91 residues: Small ribosomal subunit protein uS15 (91 aa).

Belongs to the universal ribosomal protein uS15 family. Part of the 30S ribosomal subunit. Forms a bridge to the 50S subunit in the 70S ribosome, contacting the 23S rRNA.

In terms of biological role, one of the primary rRNA binding proteins, it binds directly to 16S rRNA where it helps nucleate assembly of the platform of the 30S subunit by binding and bridging several RNA helices of the 16S rRNA. Forms an intersubunit bridge (bridge B4) with the 23S rRNA of the 50S subunit in the ribosome. In Rickettsia felis (strain ATCC VR-1525 / URRWXCal2) (Rickettsia azadi), this protein is Small ribosomal subunit protein uS15.